Here is a 368-residue protein sequence, read N- to C-terminus: DNA replication and repair protein RecF (368 aa).

30–37 (GNNAQGKT) serves as a coordination point for ATP.

Belongs to the RecF family.

It is found in the cytoplasm. In terms of biological role, the RecF protein is involved in DNA metabolism; it is required for DNA replication and normal SOS inducibility. RecF binds preferentially to single-stranded, linear DNA. It also seems to bind ATP. The chain is DNA replication and repair protein RecF from Streptococcus pyogenes serotype M6 (strain ATCC BAA-946 / MGAS10394).